We begin with the raw amino-acid sequence, 310 residues long: Probable manganese-dependent inorganic pyrophosphatase (310 aa).

Mn(2+) is bound by residues H9, D13, D15, D76, H98, and D150.

Belongs to the PPase class C family. Mn(2+) serves as cofactor.

It localises to the cytoplasm. It carries out the reaction diphosphate + H2O = 2 phosphate + H(+). The chain is Probable manganese-dependent inorganic pyrophosphatase from Streptococcus thermophilus (strain ATCC BAA-491 / LMD-9).